The following is a 132-amino-acid chain: Small ribosomal subunit protein uS8 (132 aa).

This sequence belongs to the universal ribosomal protein uS8 family. Part of the 30S ribosomal subunit. Contacts proteins S5 and S12.

Its function is as follows. One of the primary rRNA binding proteins, it binds directly to 16S rRNA central domain where it helps coordinate assembly of the platform of the 30S subunit. The sequence is that of Small ribosomal subunit protein uS8 from Rickettsia akari (strain Hartford).